A 434-amino-acid polypeptide reads, in one-letter code: Ribosomal protein uS12 methylthiotransferase RimO (434 aa).

Residues 9–125 enclose the MTTase N-terminal domain; that stretch reads PAIFLLSLGC…VLAAIGAKYR (117 aa). 6 residues coordinate [4Fe-4S] cluster: C18, C54, C88, C149, C153, and C156. The Radical SAM core domain maps to 135–364; it reads LTPPHYAFLK…MELQEGISAS (230 aa). One can recognise a TRAM domain in the interval 367 to 434; sequence RKLEGQTLKV…AYELFGRISG (68 aa).

This sequence belongs to the methylthiotransferase family. RimO subfamily. It depends on [4Fe-4S] cluster as a cofactor.

The protein resides in the cytoplasm. The catalysed reaction is L-aspartate(89)-[ribosomal protein uS12]-hydrogen + (sulfur carrier)-SH + AH2 + 2 S-adenosyl-L-methionine = 3-methylsulfanyl-L-aspartate(89)-[ribosomal protein uS12]-hydrogen + (sulfur carrier)-H + 5'-deoxyadenosine + L-methionine + A + S-adenosyl-L-homocysteine + 2 H(+). Functionally, catalyzes the methylthiolation of an aspartic acid residue of ribosomal protein uS12. This Chlorobaculum tepidum (strain ATCC 49652 / DSM 12025 / NBRC 103806 / TLS) (Chlorobium tepidum) protein is Ribosomal protein uS12 methylthiotransferase RimO.